The chain runs to 148 residues: MVKATSVKDVDQHEIVQHIAKFLKKSGKVKVPEWSDVTKMGISKELAPLNSDWYYVRTASIARRLYVRSPTGVDALRLVYGGSKRRGVVPNHFAKASGSVIRKALQTLEAIKWVQKHPDGNGRVLTKQGRKDLDRIASQMRQNDRFTA.

This sequence belongs to the eukaryotic ribosomal protein eS19 family.

Functionally, elimination of the ALEP-1 gene from all somatic cells in its fully activate state may represent an alternative way to gene regulation. This Ascaris suum (Pig roundworm) protein is Small ribosomal subunit protein eS19G (RPS19G).